A 175-amino-acid chain; its full sequence is UPF0178 protein GOX1710 (175 aa).

This sequence belongs to the UPF0178 family.

This Gluconobacter oxydans (strain 621H) (Gluconobacter suboxydans) protein is UPF0178 protein GOX1710.